A 54-amino-acid polypeptide reads, in one-letter code: ATP synthase protein 8 (54 aa).

The helical transmembrane segment at 9–25 (WVFLFFLVWLVLGFLGL) threads the bilayer.

It belongs to the ATPase protein 8 family. In terms of assembly, F-type ATPases have 2 components, CF(1) - the catalytic core - and CF(0) - the membrane proton channel.

It localises to the mitochondrion membrane. Mitochondrial membrane ATP synthase (F(1)F(0) ATP synthase or Complex V) produces ATP from ADP in the presence of a proton gradient across the membrane which is generated by electron transport complexes of the respiratory chain. F-type ATPases consist of two structural domains, F(1) - containing the extramembraneous catalytic core and F(0) - containing the membrane proton channel, linked together by a central stalk and a peripheral stalk. During catalysis, ATP synthesis in the catalytic domain of F(1) is coupled via a rotary mechanism of the central stalk subunits to proton translocation. Part of the complex F(0) domain. Minor subunit located with subunit a in the membrane. The protein is ATP synthase protein 8 (MTATP8) of Branchiostoma floridae (Florida lancelet).